Reading from the N-terminus, the 137-residue chain is Small ribosomal subunit protein uS12 (137 aa).

Aspartate 89 bears the 3-methylthioaspartic acid mark. The tract at residues 104-137 (TAGVNGRKQSRSKYGAKRPKPGQAAAAPAKGKKK) is disordered. Residues 111 to 123 (KQSRSKYGAKRPK) are compositionally biased toward basic residues. The segment covering 124-137 (PGQAAAAPAKGKKK) has biased composition (low complexity).

Belongs to the universal ribosomal protein uS12 family. Part of the 30S ribosomal subunit. Contacts proteins S8 and S17. May interact with IF1 in the 30S initiation complex.

Functionally, with S4 and S5 plays an important role in translational accuracy. In terms of biological role, interacts with and stabilizes bases of the 16S rRNA that are involved in tRNA selection in the A site and with the mRNA backbone. Located at the interface of the 30S and 50S subunits, it traverses the body of the 30S subunit contacting proteins on the other side and probably holding the rRNA structure together. The combined cluster of proteins S8, S12 and S17 appears to hold together the shoulder and platform of the 30S subunit. The protein is Small ribosomal subunit protein uS12 of Cytophaga hutchinsonii (strain ATCC 33406 / DSM 1761 / CIP 103989 / NBRC 15051 / NCIMB 9469 / D465).